The following is a 927-amino-acid chain: Lysine-specific demethylase JMJ28 (927 aa).

The WRC domain maps to V7–E52. The short motif at G30–H37 is the Nuclear localization signal 1 element. The segment at G30 to V92 is disordered. Basic residues predominate over residues R80–R91. The short motif at E127–N134 is the Nuclear localization signal 2 element. Residues C227, C230, C241, C244, C250, C253, C269, and C272 each coordinate Zn(2+). An RING-type; degenerate zinc finger spans residues C227–R273. The span at E330–N339 shows a compositional bias: basic and acidic residues. 2 disordered regions span residues E330–S359 and R701–C736. The region spanning F601–N881 is the JmjC domain.

Belongs to the JARID1 histone demethylase family. Interacts with the FBH transcription factors FBH1, FBH2, FBH3 and FBH4. It depends on Fe(2+) as a cofactor. Expressed in inflorescences, flowers, roots, siliques, leaves and stems, especially in the vasculature (mainly phloem), with highest levels in floral organs. Present at high levels in flowers, shoot apex and young seeds, but observed at low levels in dry seeds, root apex and anthers.

It is found in the nucleus. Functionally, may function as histone H3 lysine demethylase and be involved in regulation of gene expression. Regulates flowering time by promoting CONSTANS (CO) and CONSTANS-LIKE genes (e.g. COL2 and COL5) expression via interaction with FBH transcription factors (FBH1, FBH2, FBH3 and FBH4) at their loci to remove H3K9me2 repressive histone marks. Also modulates the expression of several developmental genes such as MYB30, TFS1, AGL6 and RVE2. The sequence is that of Lysine-specific demethylase JMJ28 from Arabidopsis thaliana (Mouse-ear cress).